Consider the following 864-residue polypeptide: Leucine--tRNA ligase (864 aa).

A 'HIGH' region motif is present at residues 47–57 (PYPSGNLHMGH). Residues 298-317 (SEQDRVADDRPKRGVATGGT) are disordered. Residues 299–309 (EQDRVADDRPK) show a composition bias toward basic and acidic residues. The 'KMSKS' region signature appears at 622–626 (KMSKS). Lys-625 provides a ligand contact to ATP.

This sequence belongs to the class-I aminoacyl-tRNA synthetase family.

It is found in the cytoplasm. It carries out the reaction tRNA(Leu) + L-leucine + ATP = L-leucyl-tRNA(Leu) + AMP + diphosphate. This is Leucine--tRNA ligase from Synechococcus sp. (strain RCC307).